The sequence spans 557 residues: 2-isopropylmalate synthase (557 aa).

The Pyruvate carboxyltransferase domain maps to 33–307; that stretch reads PIWCSSDLRD…DPQLDFSDID (275 aa). Residues Asp42, His246, His248, and Asn282 each contribute to the Mg(2+) site. The segment at 439-557 is regulatory domain; that stretch reads ANAPYALVSH…SLSQQQAKAA (119 aa).

Belongs to the alpha-IPM synthase/homocitrate synthase family. LeuA type 2 subfamily. Homodimer. It depends on Mg(2+) as a cofactor.

It localises to the cytoplasm. It carries out the reaction 3-methyl-2-oxobutanoate + acetyl-CoA + H2O = (2S)-2-isopropylmalate + CoA + H(+). It participates in amino-acid biosynthesis; L-leucine biosynthesis; L-leucine from 3-methyl-2-oxobutanoate: step 1/4. In terms of biological role, catalyzes the condensation of the acetyl group of acetyl-CoA with 3-methyl-2-oxobutanoate (2-ketoisovalerate) to form 3-carboxy-3-hydroxy-4-methylpentanoate (2-isopropylmalate). In Pseudomonas entomophila (strain L48), this protein is 2-isopropylmalate synthase.